A 1005-amino-acid chain; its full sequence is DNA-directed RNA polymerase subunit beta (1005 aa).

The protein belongs to the RNA polymerase beta chain family. As to quaternary structure, in plastids the minimal PEP RNA polymerase catalytic core is composed of four subunits: alpha, beta, beta', and beta''. When a (nuclear-encoded) sigma factor is associated with the core the holoenzyme is formed, which can initiate transcription (Potential).

It is found in the plastid. Its subcellular location is the apicoplast. The enzyme catalyses RNA(n) + a ribonucleoside 5'-triphosphate = RNA(n+1) + diphosphate. Functionally, DNA-dependent RNA polymerase catalyzes the transcription of DNA into RNA using the four ribonucleoside triphosphates as substrates. The protein is DNA-directed RNA polymerase subunit beta (rpoB) of Theileria parva (East coast fever infection agent).